The primary structure comprises 189 residues: UPF0301 protein A1C_00165 (189 aa).

The protein belongs to the UPF0301 (AlgH) family.

The polypeptide is UPF0301 protein A1C_00165 (Rickettsia akari (strain Hartford)).